The following is a 504-amino-acid chain: Glucosaminyl-phosphatidylinositol-acyltransferase PIGW (504 aa).

The Lumenal segment spans residues 1–21 (MSEKQMKEAFVSNLNGTTVLE). N15 carries N-linked (GlcNAc...) asparagine glycosylation. A helical membrane pass occupies residues 22-42 (ITQGLCFPAFCILCRGFLIIF). Residues 43 to 56 (SQYLCSFSPTWKTR) lie on the Cytoplasmic side of the membrane. The helical transmembrane segment at 57 to 75 (FLTDFVVLIVPMVATLTIW) threads the bilayer. Topologically, residues 76–81 (ASFILL) are lumenal. Residues 82-98 (ELLGVIIFGAGLLYQIY) traverse the membrane as a helical segment. Topologically, residues 99-131 (RRRTCYARLPFLKILEKFLNISLESEYNPAISC) are cytoplasmic. Residues 132-152 (FRVITSAFTAIAILAVDFPLF) traverse the membrane as a helical segment. Residues 153-162 (PRRFAKTELY) are Lumenal-facing. Residues 163 to 183 (GTGAMDFGVGGFVFGSAMVCL) form a helical membrane-spanning segment. The Cytoplasmic portion of the chain corresponds to 184–202 (EVRRRKYMEGSKLHYFTNS). Residues 203 to 223 (LYSVWPLVFLGIGRLAIIKSI) traverse the membrane as a helical segment. At 224-237 (GYQEHLTEYGVHWN) the chain is on the lumenal side. Residues 238–258 (FFFTIIVVKLITPLLLIIFPL) traverse the membrane as a helical segment. The Cytoplasmic portion of the chain corresponds to 259-260 (NK). The helical transmembrane segment at 261-281 (SWIIALGITVLYQLALDFTSL) threads the bilayer. Topologically, residues 282–305 (KRLILYGTDGSGTRVGLLNANREG) are lumenal. A helical transmembrane segment spans residues 306–326 (IISTLGYVAIHMAGVQTGLYM). The Cytoplasmic segment spans residues 327–338 (HKNRSHIKDLIK). The helical transmembrane segment at 339–359 (VACFLLLAAISLFISLYVVQV) threads the bilayer. Topologically, residues 360–370 (NVEAVSRRMAN) are lumenal. Residues 371–391 (LAFCIWIVASSLILLSSLLLG) form a helical membrane-spanning segment. Residues 392–448 (DIILSFAKFLIKGALVPCSWKLIQSPVTNKKHSESLVPEAERMEPSLCLITALNRKQ) are Cytoplasmic-facing. S416 is subject to Phosphoserine. Residues 449 to 469 (LIFFLLSNITTGLINLMVDTL) form a helical membrane-spanning segment. The Lumenal segment spans residues 470–473 (HSST). Residues 474 to 494 (LWALFVVNLYMFSNCLIVYVL) traverse the membrane as a helical segment. The Cytoplasmic segment spans residues 495 to 504 (YLQDKTVQFW).

It belongs to the PIGW family.

It is found in the endoplasmic reticulum membrane. Its pathway is glycolipid biosynthesis; glycosylphosphatidylinositol-anchor biosynthesis. Its function is as follows. Acyltransferase that catalyzes the acyl transfer from an acyl-CoA at the 2-OH position of the inositol ring of glucosaminyl phosphatidylinositol (GlcN-PI) to generate glucosaminyl acyl phosphatidylinositol (GlcN-(acyl)PI) and participates in the fourth step of GPI-anchor biosynthesis. Required for the transport of GPI-anchored proteins to the plasma membrane. Acetylation during GPI-anchor biosynthesis is not essential for the subsequent mannosylation and is usually removed soon after the attachment of GPIs to proteins. The chain is Glucosaminyl-phosphatidylinositol-acyltransferase PIGW from Homo sapiens (Human).